Here is a 1234-residue protein sequence, read N- to C-terminus: ATP-dependent helicase/nuclease subunit A (1234 aa).

The region spanning 9 to 482 is the UvrD-like helicase ATP-binding domain; that stretch reads STWTDDQWEA…IDLNKNFRSR (474 aa). ATP is bound at residue 30–37; it reads AAAGSGKT. In terms of domain architecture, UvrD-like helicase C-terminal spans 509-800; that stretch reads QAELKLGASY…RMMTIHSSKG (292 aa).

It belongs to the helicase family. AddA subfamily. Heterodimer of AddA and AddB/RexB. It depends on Mg(2+) as a cofactor.

It carries out the reaction Couples ATP hydrolysis with the unwinding of duplex DNA by translocating in the 3'-5' direction.. The catalysed reaction is ATP + H2O = ADP + phosphate + H(+). The heterodimer acts as both an ATP-dependent DNA helicase and an ATP-dependent, dual-direction single-stranded exonuclease. Recognizes the chi site generating a DNA molecule suitable for the initiation of homologous recombination. The AddA nuclease domain is required for chi fragment generation; this subunit has the helicase and 3' -&gt; 5' nuclease activities. This is ATP-dependent helicase/nuclease subunit A from Bacillus pumilus (strain SAFR-032).